The following is a 276-amino-acid chain: 4-chlorobenzoyl coenzyme A dehalogenase-2 (276 aa).

Residue 66-71 (AGFDLE) participates in substrate binding. H93 (proton acceptor) is an active-site residue. A substrate-binding site is contributed by G117. D148 acts as the Nucleophile in catalysis. R261 serves as a coordination point for substrate.

It belongs to the enoyl-CoA hydratase/isomerase family. As to quaternary structure, homotetramer.

The enzyme catalyses 4-chlorobenzoyl-CoA + H2O = 4-hydroxybenzoyl-CoA + chloride + H(+). It participates in xenobiotic degradation; 4-chlorobenzoate degradation; 4-hydroxybenzoate from 4-chlorobenzoate: step 2/3. Dehalogenates 4-chlorobenzoyl-CoA, 4-iodobenzoyl-CoA, 4-bromobenzoyl-CoA and, at a slower rate, 4-fluorobenzoyl-CoA. Does not dehalogenate 2-chlorobenzoyl-CoA or 3-chlorobenzoyl-CoA. This Arthrobacter sp protein is 4-chlorobenzoyl coenzyme A dehalogenase-2.